We begin with the raw amino-acid sequence, 28 residues long: Trypsin inhibitor A (28 aa).

3 disulfide bridges follow: Cys3–Cys20, Cys10–Cys22, and Cys16–Cys27.

The protein belongs to the protease inhibitor I7 (squash-type serine protease inhibitor) family.

The protein localises to the secreted. Inhibits trypsin. The protein is Trypsin inhibitor A of Momordica charantia (Bitter gourd).